Consider the following 424-residue polypeptide: Histidine--tRNA ligase (424 aa).

Belongs to the class-II aminoacyl-tRNA synthetase family. In terms of assembly, homodimer.

The protein localises to the cytoplasm. The catalysed reaction is tRNA(His) + L-histidine + ATP = L-histidyl-tRNA(His) + AMP + diphosphate + H(+). This is Histidine--tRNA ligase (hisS) from Bacillus subtilis (strain 168).